The chain runs to 187 residues: Large ribosomal subunit protein uL5 (187 aa).

The protein belongs to the universal ribosomal protein uL5 family. Part of the 50S ribosomal subunit; part of the 5S rRNA/L5/L18/L25 subcomplex. Contacts the 5S rRNA and the P site tRNA. Forms a bridge to the 30S subunit in the 70S ribosome.

In terms of biological role, this is one of the proteins that bind and probably mediate the attachment of the 5S RNA into the large ribosomal subunit, where it forms part of the central protuberance. In the 70S ribosome it contacts protein S13 of the 30S subunit (bridge B1b), connecting the 2 subunits; this bridge is implicated in subunit movement. Contacts the P site tRNA; the 5S rRNA and some of its associated proteins might help stabilize positioning of ribosome-bound tRNAs. The chain is Large ribosomal subunit protein uL5 from Saccharopolyspora erythraea (strain ATCC 11635 / DSM 40517 / JCM 4748 / NBRC 13426 / NCIMB 8594 / NRRL 2338).